The chain runs to 447 residues: Putative branched-chain amino acid carrier protein SAR1419 (447 aa).

The next 12 membrane-spanning stretches (helical) occupy residues 6–26 (WVIG…IFPP), 40–60 (ILAF…VGAL), 74–94 (PKFS…LFAI), 114–134 (SSIA…YICL), 143–163 (IGSL…IKAY), 193–213 (GYLT…VNAV), 229–249 (LTAG…LGYI), 290–310 (LLGI…IVAV), 326–346 (FVLV…NAVI), 350–370 (IPVL…ILIA), 382–402 (IPVI…LGWL), and 417–437 (LEWF…GIFV).

This sequence belongs to the branched chain amino acid transporter family.

It is found in the cell membrane. Component of the transport system for branched-chain amino acids (leucine, isoleucine and valine), which is coupled to a proton motive force (Potential). Contributes to NaCl tolerance. This is Putative branched-chain amino acid carrier protein SAR1419 from Staphylococcus aureus (strain MRSA252).